We begin with the raw amino-acid sequence, 340 residues long: MVSDVSEPSDTTPEVVVQQQPQPKTLTHLISGASAGLISAISLQPFDLLKTRLQQQQRSNIKYRTTISKELKKLTHIRDLWRGALPSTLRTSVGAGLYFTILSSARNGISDYKRSSDSVSDTSILPKLSPFENLATGFIVRAVVGIITMPITIVKTRYESNIYNYNSMYEGFENIYLDGNQKGQGSLKNFFKGSFATLARDCPYAGMYVLFYELFKNDILTKVVPPIDETENGPITRSTIINTSAAILAASVSTTITAPFDAIKTRLQLSSIVASKKMTLWSATKDLMREDGGVKNLFRGLSLRFGRKGLSSGISWCIYEELIKSNFAQVIITKSDKKLV.

Solcar repeat units follow at residues Pro23–Gly108, Leu128–Asp218, and Arg237–Ser325. Transmembrane regions (helical) follow at residues Leu29 to Gln54, Gly83 to Ile109, Leu134 to Glu159, Gly193 to Lys216, Ile241 to Leu267, and Gly300 to Ile318.

This sequence belongs to the mitochondrial carrier (TC 2.A.29) family. SLC25A38 subfamily.

The protein resides in the mitochondrion inner membrane. It carries out the reaction glycine(in) = glycine(out). Mitochondrial glycine transporter that imports glycine into the mitochondrial matrix. Plays an important role in providing glycine for the first enzymatic step in heme biosynthesis, the condensation of glycine with succinyl-CoA to produce 5-aminolevulinate (ALA) in the mitochondrial matrix. The polypeptide is Mitochondrial glycine transporter (Debaryomyces hansenii (strain ATCC 36239 / CBS 767 / BCRC 21394 / JCM 1990 / NBRC 0083 / IGC 2968) (Yeast)).